The primary structure comprises 318 residues: MSVDQTLYSRTPTAMADPTCAGPAAFTAAGAFSQPDLMAFSLREEEPIWGFDTIAPSMASWQGKMEQQTFCNPNMERGLKNTHVRNGQPTPPPFDDKKLQTPMGEMYPVAQYAFNSSPPEYAPPKHRSSLSEQSQTDGYGVSTRRRKASAIDQCEQQQEREKREKFLERNRLAASKCRQKKKEHTKLLETRFREVSNKKGELESEIEHLRSEVLNLKNEMLRHAQCGDEAIKIHLAQMVRLITSKDTPNRDLVSPMRSPEQMAASTPHGLSFGFDGPMQLPSEMGSPLDQRRDSEQSIMTESSYTFSTDDSFEELINV.

A disordered region spans residues 114 to 157 (FNSSPPEYAPPKHRSSLSEQSQTDGYGVSTRRRKASAIDQCEQQ). The tract at residues 160 to 199 (REKREKFLERNRLAASKCRQKKKEHTKLLETRFREVSNKK) is basic motif. Residues 160 to 223 (REKREKFLER…LNLKNEMLRH (64 aa)) form the bZIP domain. Positions 202-216 (LESEIEHLRSEVLNL) are leucine-zipper. Positions 275–301 (DGPMQLPSEMGSPLDQRRDSEQSIMTE) are disordered.

Belongs to the bZIP family. ATF subfamily.

It is found in the nucleus. In terms of biological role, transcription factor that acts as a key player in the regulatory circuit that integrates secondary metabolism and cellular response to oxidative stress. Regulates the genes involved in development and stress response through direct binding to their promoters. Particularly involved in the resistance to oxidative stress in asexual conidiospores. This Aspergillus oryzae (strain ATCC 42149 / RIB 40) (Yellow koji mold) protein is Basic leucine zipper (bZIP) transcription factor atfB.